A 355-amino-acid polypeptide reads, in one-letter code: Phosphoribosylformylglycinamidine cyclo-ligase (355 aa).

It belongs to the AIR synthase family.

The protein localises to the cytoplasm. It carries out the reaction 2-formamido-N(1)-(5-O-phospho-beta-D-ribosyl)acetamidine + ATP = 5-amino-1-(5-phospho-beta-D-ribosyl)imidazole + ADP + phosphate + H(+). Its pathway is purine metabolism; IMP biosynthesis via de novo pathway; 5-amino-1-(5-phospho-D-ribosyl)imidazole from N(2)-formyl-N(1)-(5-phospho-D-ribosyl)glycinamide: step 2/2. The protein is Phosphoribosylformylglycinamidine cyclo-ligase of Paraburkholderia xenovorans (strain LB400).